We begin with the raw amino-acid sequence, 444 residues long: Phosphoglucosamine mutase (444 aa).

The active-site Phosphoserine intermediate is the S101. The Mg(2+) site is built by S101, D240, D242, and D244. S101 is modified (phosphoserine).

This sequence belongs to the phosphohexose mutase family. It depends on Mg(2+) as a cofactor. Activated by phosphorylation.

The enzyme catalyses alpha-D-glucosamine 1-phosphate = D-glucosamine 6-phosphate. In terms of biological role, catalyzes the conversion of glucosamine-6-phosphate to glucosamine-1-phosphate. In Sphingopyxis alaskensis (strain DSM 13593 / LMG 18877 / RB2256) (Sphingomonas alaskensis), this protein is Phosphoglucosamine mutase.